Consider the following 88-residue polypeptide: Potassium channel toxin MeuTXKbeta3-meucin-24 (88 aa).

An N-terminal signal peptide occupies residues 1–22 (MMKQQFFLFLAVIVMISSVIEA). The BetaSPN-type CS-alpha/beta domain maps to 55–88 (EYACPVIEKWCEDHCQAKNAIGRCENTECKCLSK). 3 disulfide bridges follow: cysteine 58–cysteine 78, cysteine 65–cysteine 83, and cysteine 69–cysteine 85.

Belongs to the long chain scorpion toxin family. Class 2 subfamily. In terms of tissue distribution, expressed by the venom gland.

It is found in the secreted. Functionally, inhibits voltage-gated potassium channels. In terms of biological role, the synthetic meucin-24 inhibits the development of P.berghei ookinetes, kills intraerythrocytic P.falciparum, and is cytotoxic to the Drosophila S2 cells at micromolar concentrations. No antibacterial, antifungal and hemolytic activities have been found at micromolar concentrations. The chain is Potassium channel toxin MeuTXKbeta3-meucin-24 from Mesobuthus eupeus (Lesser Asian scorpion).